Consider the following 497-residue polypeptide: Serine hydroxymethyltransferase (497 aa).

Residues L176 and 180-182 (GHL) each bind (6S)-5,6,7,8-tetrahydrofolate. K289 carries the post-translational modification N6-(pyridoxal phosphate)lysine.

This sequence belongs to the SHMT family. As to quaternary structure, homodimer. Pyridoxal 5'-phosphate is required as a cofactor.

Its subcellular location is the cytoplasm. It catalyses the reaction (6R)-5,10-methylene-5,6,7,8-tetrahydrofolate + glycine + H2O = (6S)-5,6,7,8-tetrahydrofolate + L-serine. The protein operates within one-carbon metabolism; tetrahydrofolate interconversion. Its pathway is amino-acid biosynthesis; glycine biosynthesis; glycine from L-serine: step 1/1. In terms of biological role, catalyzes the reversible interconversion of serine and glycine with tetrahydrofolate (THF) serving as the one-carbon carrier. This reaction serves as the major source of one-carbon groups required for the biosynthesis of purines, thymidylate, methionine, and other important biomolecules. Also exhibits THF-independent aldolase activity toward beta-hydroxyamino acids, producing glycine and aldehydes, via a retro-aldol mechanism. This chain is Serine hydroxymethyltransferase, found in Chlamydia trachomatis serovar L2b (strain UCH-1/proctitis).